The following is a 153-amino-acid chain: UPF0756 membrane protein LCABL_15860 (153 aa).

4 helical membrane-spanning segments follow: residues 4 to 24, 52 to 72, 85 to 105, and 115 to 135; these read WLFL…SLII, WGVT…EIGF, WIAI…VGLL, and LVFG…GPVI.

The protein belongs to the UPF0756 family.

It localises to the cell membrane. The protein is UPF0756 membrane protein LCABL_15860 of Lacticaseibacillus casei (strain BL23) (Lactobacillus casei).